The chain runs to 212 residues: ATP phosphoribosyltransferase (212 aa).

This sequence belongs to the ATP phosphoribosyltransferase family. Short subfamily. In terms of assembly, heteromultimer composed of HisG and HisZ subunits.

The protein resides in the cytoplasm. The catalysed reaction is 1-(5-phospho-beta-D-ribosyl)-ATP + diphosphate = 5-phospho-alpha-D-ribose 1-diphosphate + ATP. The protein operates within amino-acid biosynthesis; L-histidine biosynthesis; L-histidine from 5-phospho-alpha-D-ribose 1-diphosphate: step 1/9. Catalyzes the condensation of ATP and 5-phosphoribose 1-diphosphate to form N'-(5'-phosphoribosyl)-ATP (PR-ATP). Has a crucial role in the pathway because the rate of histidine biosynthesis seems to be controlled primarily by regulation of HisG enzymatic activity. The sequence is that of ATP phosphoribosyltransferase from Prochlorococcus marinus (strain MIT 9301).